The chain runs to 162 residues: Phospholipase A and acyltransferase 2 (162 aa).

The Cytoplasmic segment spans residues 1–133; the sequence is MALARPRPRL…VSRSDQVTGA (133 aa). Positions 13–129 constitute an LRAT domain; sequence LIEISRFGYA…LRYGVSRSDQ (117 aa). Active-site residues include His23 and His35. Catalysis depends on Cys113, which acts as the Acyl-thioester intermediate. A helical membrane pass occupies residues 134–154; sequence VTTVGVAAGLLAAASLVGILL. The Lumenal segment spans residues 155–162; it reads ARSKRERQ.

The protein belongs to the H-rev107 family. Expressed in liver, kidney, small intestine testis and colon. Undetectable in testis, placenta, salivary gland and fetal brain.

Its subcellular location is the cytoplasm. It is found in the membrane. It carries out the reaction a 1,2-diacyl-sn-glycero-3-phosphocholine + H2O = a 1-acyl-sn-glycero-3-phosphocholine + a fatty acid + H(+). The enzyme catalyses a 1,2-diacyl-sn-glycero-3-phosphocholine + H2O = a 2-acyl-sn-glycero-3-phosphocholine + a fatty acid + H(+). The catalysed reaction is a 1,2-diacyl-sn-glycero-3-phosphoethanolamine + a 1,2-diacyl-sn-glycero-3-phosphocholine = an N-acyl-1,2-diacyl-sn-glycero-3-phosphoethanolamine + a 1-acyl-sn-glycero-3-phosphocholine + H(+). It catalyses the reaction a 1,2-diacyl-sn-glycero-3-phosphoethanolamine + a 1,2-diacyl-sn-glycero-3-phosphocholine = an N-acyl-1,2-diacyl-sn-glycero-3-phosphoethanolamine + a 2-acyl-sn-glycero-3-phosphocholine + H(+). It carries out the reaction 1,2-dihexadecanoyl-sn-glycero-3-phosphocholine + H2O = 1-hexadecanoyl-sn-glycero-3-phosphocholine + hexadecanoate + H(+). The enzyme catalyses 1,2-dihexadecanoyl-sn-glycero-3-phosphocholine + H2O = 2-hexadecanoyl-sn-glycero-3-phosphocholine + hexadecanoate + H(+). The catalysed reaction is 1-hexadecanoyl-2-(9Z-octadecenoyl)-sn-glycero-3-phosphocholine + H2O = 2-(9Z-octadecenoyl)-sn-glycero-3-phosphocholine + hexadecanoate + H(+). It catalyses the reaction 1-hexadecanoyl-2-(9Z-octadecenoyl)-sn-glycero-3-phosphocholine + H2O = 1-hexadecanoyl-sn-glycero-3-phosphocholine + (9Z)-octadecenoate + H(+). It carries out the reaction 1-hexadecanoyl-2-(5Z,8Z,11Z,14Z-eicosatetraenoyl)-sn-glycero-3-phosphocholine + H2O = 2-(5Z,8Z,11Z,14Z)-eicosatetraenoyl-sn-glycero-3-phosphocholine + hexadecanoate + H(+). The enzyme catalyses 1-hexadecanoyl-2-(9Z,12Z-octadecadienoyl)-sn-glycero-3-phosphoethanolamine + H2O = 1-hexadecanoyl-sn-glycero-3-phosphoethanolamine + (9Z,12Z)-octadecadienoate + H(+). The catalysed reaction is 1-hexadecanoyl-2-(9Z,12Z-octadecadienoyl)-sn-glycero-3-phosphoethanolamine + H2O = 2-(9Z,12Z)-octadecadienoyl-sn-glycero-3-phosphoethanolamine + hexadecanoate + H(+). It catalyses the reaction 1-hexadecanoyl-2-(5Z,8Z,11Z,14Z-eicosatetraenoyl)-sn-glycero-3-phosphoethanolamine + H2O = 1-hexadecanoyl-sn-glycero-3-phosphoethanolamine + (5Z,8Z,11Z,14Z)-eicosatetraenoate + H(+). It carries out the reaction 1-hexadecanoyl-2-(5Z,8Z,11Z,14Z-eicosatetraenoyl)-sn-glycero-3-phosphoethanolamine + H2O = 2-(5Z,8Z,11Z,14Z)-eicosatetraenoyl-sn-glycero-3-phosphoethanolamine + hexadecanoate + H(+). The enzyme catalyses 1,2-di-(9Z-octadecenoyl)-sn-glycero-3-phosphoethanolamine + 1,2-dihexadecanoyl-sn-glycero-3-phosphocholine = N-hexadecanoyl-1,2-di-(9Z-octadecenoyl)-sn-glycero-3-phosphoethanolamine + 2-hexadecanoyl-sn-glycero-3-phosphocholine + H(+). The catalysed reaction is 1,2-di-(9Z-octadecenoyl)-sn-glycero-3-phosphoethanolamine + 1,2-dihexadecanoyl-sn-glycero-3-phosphocholine = N-hexadecanoyl-1,2-di-(9Z-octadecenoyl)-sn-glycero-3-phosphoethanolamine + 1-hexadecanoyl-sn-glycero-3-phosphocholine + H(+). It catalyses the reaction 1-hexanoyl-2-acyl-sn-glycero-3-phosphocholine + H2O = 1-hexanoyl-sn-glycero-3-phosphocholine + a fatty acid + H(+). It carries out the reaction 1,2-diheptadecanoyl-sn-glycero-3-phosphoethanolamine + 1-(9Z-octadecenoyl)-2-hexadecanoyl-sn-glycero-3-phosphocholine = 1,2-diheptadecanoyl-sn-glycero-3-phospho-N-hexadecanoyl-ethanolamine + 1-(9Z-octadecenoyl)-sn-glycero-3-phosphocholine + H(+). The enzyme catalyses 1,2-diheptadecanoyl-sn-glycero-3-phosphoethanolamine + 1-(9Z-octadecenoyl)-2-hexadecanoyl-sn-glycero-3-phosphocholine = 1,2-diheptadecanoyl-sn-glycero-3-phospho-N-(9Z-octadecenoyl)-ethanolamine + 2-hexadecanoyl-sn-glycero-3-phosphocholine + H(+). The catalysed reaction is 1,2-dihexanoyl-sn-glycero-3-phosphocholine + 1,2-diheptanoyl-sn-glycero-3-phosphocholine = 1-heptanoyl-2-hexanoyl-sn-glycero-3-phosphocholine + 1-hexanoyl-2-heptanoyl-sn-glycero-3-phosphocholine. It catalyses the reaction 1,2-diheptanoyl-sn-glycero-3-phosphocholine + 1,2-dihexadecanoyl-sn-glycero-3-phosphocholine = 1-hexadecanoyl-2-heptanoyl-sn-glycero-3-phosphocholine + 1-heptanoyl-2-hexadecanoyl-sn-glycero-3-phosphocholine. It carries out the reaction 1,2-dihexanoyl-sn-glycero-3-phosphoethanolamine + 1,2-diheptanoyl-sn-glycero-3-phosphocholine = 1-heptanoyl-2-hexanoyl-sn-glycero-3-phosphoethanolamine + 1-hexanoyl-2-heptanoyl-sn-glycero-3-phosphocholine. The enzyme catalyses 1-hexanoyl-2-acyl-sn-glycero-3-phosphocholine + H2O = hexanoate + a 2-acyl-sn-glycero-3-phosphocholine + H(+). The catalysed reaction is 1,2-dihexanoyl-sn-glycero-3-phosphoethanolamine + 2-heptanoyl-sn-glycero-3-phosphocholine = hexanoyl-sn-glycero-3-phosphoethanolamine + 1-hexanoyl-2-heptanoyl-sn-glycero-3-phosphocholine. In terms of biological role, exhibits both phospholipase A1/2 and acyltransferase activities. Shows phospholipase A1 (PLA1) and A2 (PLA2) activity, catalyzing the calcium-independent release of fatty acids from the sn-1 or sn-2 position of glycerophospholipids. For most substrates, PLA1 activity is much higher than PLA2 activity. Shows O-acyltransferase activity, catalyzing the transfer of a fatty acyl group from glycerophospholipid to the hydroxyl group of lysophospholipid. Shows N-acyltransferase activity, catalyzing the calcium-independent transfer of a fatty acyl group at the sn-1 position of phosphatidylcholine (PC) and other glycerophospholipids to the primary amine of phosphatidylethanolamine (PE), forming N-acylphosphatidylethanolamine (NAPE), which serves as precursor for N-acylethanolamines (NAEs). Catalyzes N-acylation of PE using both sn-1 and sn-2 palmitoyl groups of PC as acyl donor. Exhibits high phospholipase A1/2 activity and low N-acyltransferase activity. The protein is Phospholipase A and acyltransferase 2 of Homo sapiens (Human).